Reading from the N-terminus, the 3925-residue chain is Polyketide synthase ThaH (3925 aa).

Residues 1–56 form a disordered region; sequence MPRWRPTWLKRLSCPKQPRHPTHPKHPTHPKHPKHPKHPRHPKHPRISRRCSSASA. A compositionally biased stretch (basic residues) spans 17-49; it reads QPRHPTHPKHPTHPKHPKHPKHPRHPKHPRISR. The region spanning 1073–1148 is the Carrier 1 domain; the sequence is GLVGGLEGEV…DIAGYIASAE (76 aa). The residue at position 1108 (Ser1108) is an O-(pantetheine 4'-phosphoryl)serine. Residues 1166–1182 are compositionally biased toward low complexity; sequence AAVATPPGRPAGEAAGA. The disordered stretch occupies residues 1166–1233; it reads AAVATPPGRP…GEPARAASHG (68 aa). Residues 1183–1196 are compositionally biased toward basic and acidic residues; sequence QRDRAPRAADERAD. Residues 1202 to 1216 are compositionally biased toward low complexity; the sequence is PSDAHASKAAAIDSR. Positions 1237–1667 constitute a Ketosynthase family 3 (KS3) 1 domain; sequence ADGLAIIGIA…GTNAHALVEA (431 aa). Residues Cys1413, His1549, and His1589 each act as for beta-ketoacyl synthase 1 activity in the active site. Residues 1679 to 1698 form a disordered region; the sequence is GATGAPDVPDAPDAPDAPDA. An N-terminal hotdog fold region spans residues 1844 to 1969; that stretch reads HPLLHRNVST…GHVQRIAEPA (126 aa). Positions 1844-2143 constitute a PKS/mFAS DH domain; that stretch reads HPLLHRNVST…ARRFVREPAR (300 aa). The Proton acceptor; for dehydratase activity role is filled by His1873. The interval 1983–2143 is C-terminal hotdog fold; that stretch reads AAPRLSAARC…ARRFVREPAR (161 aa). The active-site Proton donor; for dehydratase activity is Asp2043. Low complexity-rich tracts occupy residues 2594-2607 and 2632-2646; these read DDPA…AASS and PAAA…ASDA. Disordered regions lie at residues 2594-2613 and 2619-2657; these read DDPA…LPEM and APAD…AAPA. The 74-residue stretch at 2664 to 2737 folds into the Carrier 2 domain; that stretch reads EHALALLKRL…ELACYFVAHH (74 aa). Position 2698 is an O-(pantetheine 4'-phosphoryl)serine (Ser2698). Positions 2753–2768 are enriched in low complexity; it reads LAPAPAQPLAPRAPSA. Positions 2753-2841 are disordered; the sequence is LAPAPAQPLA…AHAPAQASAP (89 aa). Residues 2770-2779 are compositionally biased toward basic and acidic residues; that stretch reads PARDAARSLE. Low complexity-rich tracts occupy residues 2789-2813 and 2823-2841; these read GQEP…QASA and ETRT…ASAP. A Ketosynthase family 3 (KS3) 2 domain is found at 2847–3286; that stretch reads AFDIAIVGLA…GSNAHLIVEE (440 aa). Residues Cys3022, His3157, and His3197 each act as for beta-ketoacyl synthase 2 activity in the active site. 2 stretches are compositionally biased toward low complexity: residues 3512–3524 and 3578–3592; these read ASTA…PSPA and AAAA…SSPS. Disordered stretches follow at residues 3512 to 3531 and 3578 to 3619; these read ASTA…STGE and AAAA…AAPD. Positions 3593 to 3603 are enriched in pro residues; that stretch reads PSSPSPLPSSP. Over residues 3604 to 3619 the composition is skewed to low complexity; that stretch reads PRMSSRQHASPAAAPD. In terms of domain architecture, Carrier 3 spans 3622 to 3699; the sequence is AALLDIEAFL…AMARHVSSNA (78 aa). Ser3659 is modified (O-(pantetheine 4'-phosphoryl)serine). Residues 3734-3754 are disordered; it reads PAPFASAAPPEPPASPARADG. Positions 3762–3839 constitute a Carrier 4 domain; it reads TSLDAIRAHL…ALARFVGTQL (78 aa). Ser3799 is modified (O-(pantetheine 4'-phosphoryl)serine).

It belongs to the ATP-dependent AMP-binding enzyme family. Pantetheine 4'-phosphate serves as cofactor.

It is found in the cytoplasm. The protein operates within antibiotic biosynthesis. Its function is as follows. Involved in production of the polyketide antibiotic thailandamide. This is Polyketide synthase ThaH from Burkholderia thailandensis (strain ATCC 700388 / DSM 13276 / CCUG 48851 / CIP 106301 / E264).